The chain runs to 619 residues: Chaperone protein DnaK (619 aa).

A Phosphothreonine; by autocatalysis modification is found at threonine 175. The disordered stretch occupies residues 578-619; it reads NGGAQGQGFDPNNMGGANAGAGATNNNDDNVVDADFEVQDDK. Residues 589-606 are compositionally biased toward low complexity; it reads NNMGGANAGAGATNNNDD. The segment covering 607–619 has biased composition (acidic residues); it reads NVVDADFEVQDDK.

The protein belongs to the heat shock protein 70 family.

Functionally, acts as a chaperone. The polypeptide is Chaperone protein DnaK (Clostridium perfringens (strain ATCC 13124 / DSM 756 / JCM 1290 / NCIMB 6125 / NCTC 8237 / Type A)).